We begin with the raw amino-acid sequence, 123 residues long: Translation initiation factor 1A (123 aa).

Residues 1–11 show a composition bias toward acidic residues; the sequence is MSPDKTEDEDK. Positions 1-26 are disordered; that stretch reads MSPDKTEDEDKDVNVDQDQFNEEEES. The S1-like domain maps to 28-102; that stretch reads GRVILPNKKK…EKADVVYRYT (75 aa).

Belongs to the eIF-1A family.

In terms of biological role, seems to be required for maximal rate of protein biosynthesis. Enhances ribosome dissociation into subunits and stabilizes the binding of the initiator Met-tRNA(I) to 40 S ribosomal subunits. The chain is Translation initiation factor 1A (eIF1A) from Thermoplasma volcanium (strain ATCC 51530 / DSM 4299 / JCM 9571 / NBRC 15438 / GSS1).